Reading from the N-terminus, the 331-residue chain is Aspartate carbamoyltransferase catalytic subunit (331 aa).

2 residues coordinate carbamoyl phosphate: Arg55 and Thr56. L-aspartate is bound at residue Lys84. The carbamoyl phosphate site is built by Arg105, His133, and Gln136. Positions 166 and 229 each coordinate L-aspartate. Carbamoyl phosphate is bound by residues Leu268 and Pro269.

It belongs to the aspartate/ornithine carbamoyltransferase superfamily. ATCase family. As to quaternary structure, heterododecamer (2C3:3R2) of six catalytic PyrB chains organized as two trimers (C3), and six regulatory PyrI chains organized as three dimers (R2).

It carries out the reaction carbamoyl phosphate + L-aspartate = N-carbamoyl-L-aspartate + phosphate + H(+). It functions in the pathway pyrimidine metabolism; UMP biosynthesis via de novo pathway; (S)-dihydroorotate from bicarbonate: step 2/3. Functionally, catalyzes the condensation of carbamoyl phosphate and aspartate to form carbamoyl aspartate and inorganic phosphate, the committed step in the de novo pyrimidine nucleotide biosynthesis pathway. The chain is Aspartate carbamoyltransferase catalytic subunit from Alkaliphilus oremlandii (strain OhILAs) (Clostridium oremlandii (strain OhILAs)).